The chain runs to 333 residues: Sphingomyelinase C (333 aa).

A signal peptide spans 1–26; that stretch reads MKGKLLKGVLSLGVGLGALYSGTSAQ. Cysteine 150 and cysteine 186 are disulfide-bonded.

The protein belongs to the neutral sphingomyelinase family. Requires Mg(2+) as cofactor. In terms of processing, the N-terminus is blocked.

It localises to the secreted. It catalyses the reaction a sphingomyelin + H2O = phosphocholine + an N-acylsphing-4-enine + H(+). With respect to regulation, activated by cobalt and manganese ions. Its function is as follows. Required, with sphingomyelinase, to effect target cell lysis (hemolysis). The protein is Sphingomyelinase C (cerB) of Bacillus cereus.